The chain runs to 320 residues: MSTPTFVHRTVLLTEAVDALAIRPDGVYVDCTFGRGGHSRLILSKLGPSGRLIAFDKDPEAIAVADRLAAEDSRFNIVHNGFETLSAELARLGVAGVDGVLMDLGVSSPQIDDGSRGFSFRFDAPLDMRMDTTRGVTAAEWLATADEADIREVIKTYGEERFARKIAAAIVAQRDESPITTTRELAVLVGQNVRTREPGQDPATRTFQAIRIFVNRELDELKAVLPQAARLLNEGGRLAVISFHSLEDRIVKLYLRDVSSEEKLPAWAMVRAADMAQPPIDLVGKAIRAGDEEVRENPRARSAIMRVAQRTAAPWREGDA.

Residues 36-38 (GGH), D56, F82, D103, and Q110 each bind S-adenosyl-L-methionine.

The protein belongs to the methyltransferase superfamily. RsmH family.

The protein resides in the cytoplasm. The catalysed reaction is cytidine(1402) in 16S rRNA + S-adenosyl-L-methionine = N(4)-methylcytidine(1402) in 16S rRNA + S-adenosyl-L-homocysteine + H(+). In terms of biological role, specifically methylates the N4 position of cytidine in position 1402 (C1402) of 16S rRNA. This Chromobacterium violaceum (strain ATCC 12472 / DSM 30191 / JCM 1249 / CCUG 213 / NBRC 12614 / NCIMB 9131 / NCTC 9757 / MK) protein is Ribosomal RNA small subunit methyltransferase H.